The chain runs to 1117 residues: DNA polymerase II large subunit (1117 aa).

Over residues 279-294 the composition is skewed to basic and acidic residues; sequence STKEEEKKKEESSENK. Positions 279-299 are disordered; sequence STKEEEKKKEESSENKPKKKA.

It belongs to the archaeal DNA polymerase II family. Heterodimer of a large subunit and a small subunit.

The enzyme catalyses DNA(n) + a 2'-deoxyribonucleoside 5'-triphosphate = DNA(n+1) + diphosphate. It carries out the reaction Exonucleolytic cleavage in the 3'- to 5'-direction to yield nucleoside 5'-phosphates.. In terms of biological role, possesses two activities: a DNA synthesis (polymerase) and an exonucleolytic activity that degrades single-stranded DNA in the 3'- to 5'-direction. Has a template-primer preference which is characteristic of a replicative DNA polymerase. The protein is DNA polymerase II large subunit of Methanosphaera stadtmanae (strain ATCC 43021 / DSM 3091 / JCM 11832 / MCB-3).